Here is a 242-residue protein sequence, read N- to C-terminus: UPF0309 protein BAbS19_II03080 (242 aa).

The SIS domain maps to 30-214 (AADLIAAAAR…ARLVGEGDAP (185 aa)).

This sequence belongs to the UPF0309 family.

The polypeptide is UPF0309 protein BAbS19_II03080 (Brucella abortus (strain S19)).